A 253-amino-acid polypeptide reads, in one-letter code: 2-dehydro-3-deoxy-D-gluconate 5-dehydrogenase (253 aa).

14–38 (LITGCDTGLGQGMAVGLAEAGCDIV) serves as a coordination point for NAD(+). A substrate-binding site is contributed by serine 145. The active-site Proton acceptor is the tyrosine 158.

Belongs to the short-chain dehydrogenases/reductases (SDR) family.

It catalyses the reaction 2-dehydro-3-deoxy-D-gluconate + NAD(+) = 3-deoxy-D-glycero-2,5-hexodiulosonate + NADH + H(+). The protein operates within glycan metabolism; pectin degradation; 2-dehydro-3-deoxy-D-gluconate from pectin: step 5/5. In terms of biological role, catalyzes the reduction of 2,5-diketo-3-deoxygluconate (DKII or 4,6-dihydroxy-2,5-dioxohexanoate) into 2-keto-3-deoxygluconate (KDG or 2-dehydro-3-deoxygluconate) with a concomitant oxidation of NADH. This chain is 2-dehydro-3-deoxy-D-gluconate 5-dehydrogenase (kduD), found in Dickeya dadantii (strain 3937) (Erwinia chrysanthemi (strain 3937)).